Reading from the N-terminus, the 300-residue chain is tRNA dimethylallyltransferase (300 aa).

An ATP-binding site is contributed by 9-16 (GTTASGKS). 11-16 (TASGKS) serves as a coordination point for substrate. Positions 34 to 37 (DSLC) are interaction with substrate tRNA.

It belongs to the IPP transferase family. As to quaternary structure, monomer. Mg(2+) serves as cofactor.

It carries out the reaction adenosine(37) in tRNA + dimethylallyl diphosphate = N(6)-dimethylallyladenosine(37) in tRNA + diphosphate. Its function is as follows. Catalyzes the transfer of a dimethylallyl group onto the adenine at position 37 in tRNAs that read codons beginning with uridine, leading to the formation of N6-(dimethylallyl)adenosine (i(6)A). The sequence is that of tRNA dimethylallyltransferase from Campylobacter fetus subsp. fetus (strain 82-40).